A 160-amino-acid polypeptide reads, in one-letter code: Lipoprotein signal peptidase (160 aa).

2 helical membrane-spanning segments follow: residues 59–79 and 84–104; these read PEGI…YVWI and SPLF…NLID. Active-site residues include Asp113 and Asp139. Residues 132–152 form a helical membrane-spanning segment; sequence WPIFNIADACITIGACLLFFF.

It belongs to the peptidase A8 family.

It is found in the cell inner membrane. The enzyme catalyses Release of signal peptides from bacterial membrane prolipoproteins. Hydrolyzes -Xaa-Yaa-Zaa-|-(S,diacylglyceryl)Cys-, in which Xaa is hydrophobic (preferably Leu), and Yaa (Ala or Ser) and Zaa (Gly or Ala) have small, neutral side chains.. It functions in the pathway protein modification; lipoprotein biosynthesis (signal peptide cleavage). This protein specifically catalyzes the removal of signal peptides from prolipoproteins. The protein is Lipoprotein signal peptidase of Chlorobaculum parvum (strain DSM 263 / NCIMB 8327) (Chlorobium vibrioforme subsp. thiosulfatophilum).